We begin with the raw amino-acid sequence, 140 residues long: Large ribosomal subunit protein uL11 (140 aa).

The protein belongs to the universal ribosomal protein uL11 family. As to quaternary structure, part of the ribosomal stalk of the 50S ribosomal subunit. Interacts with L10 and the large rRNA to form the base of the stalk. L10 forms an elongated spine to which L12 dimers bind in a sequential fashion forming a multimeric L10(L12)X complex. One or more lysine residues are methylated.

Its function is as follows. Forms part of the ribosomal stalk which helps the ribosome interact with GTP-bound translation factors. This Caldanaerobacter subterraneus subsp. tengcongensis (strain DSM 15242 / JCM 11007 / NBRC 100824 / MB4) (Thermoanaerobacter tengcongensis) protein is Large ribosomal subunit protein uL11.